A 909-amino-acid polypeptide reads, in one-letter code: MFGKLLTKVFGSRNDRTLKGLQKVVIKINALEADYEKLTDEELKAKTAEFRERLAAGETLDDIMAEAFATVREASKRVFEMRHFDVQLLGGMVLDSNRIAEMRTGEGKTLTATLPAYLNALTGKGVHVITVNDYLARRDAENNRPLFEFLGLTVGINVAGIGQQEKKAAYNADITYGTNNEFGFDYLRDNMAFSPQDRVQRPLHYALIDEVDSILIDEARTPLIISGAAEDSSELYTKINTLIPNLIRQDKEDSEEYVGEGDYSIDEKAKQVHFTERGQEKVENLLIERGMLAEGDSLYSAANISLLHHVNAALRAHTLFERDVDYIVQDGEVIIVDEHTGRTMPGRRWSEGLHQAVEAKEGVHIQNENQTLASITFQNYFRQYEKLAGMTGTADTEAFEFQHIYGLDTVVVPTNRPMVRKDMADLVYLTANEKYQAIIKDIKDCRERGQPVLVGTVSIEQSELLARLMVQEKIPHQVLNAKFHEKEAEIVAQAGRTGAVTIATNMAGRGTDIVLGGNWNMEIDALDNPTPEQKAKIKADWQVRHDAVVAAGGLHILGTERHESRRIDNQLRGRAGRQGDAGSSRFYLSMEDSLMRIFASDRVSGMMKKLGMEEGEAIEHPWVSRAIENAQRKVEARNFDIRKQLLEFDDVANDQRQVVYAQRNELMDAESIEDTIKNIQDDVIGAVIDQYIPPQSVEELWDVPGLEQRLNQEFMLKLPIQEWLDKEDDLHEESLRERIITSWSDAYKAKEEMVGASVLRQFEKAVMLQTLDGLWKEHLAAMDHLRQGIHLRGYAQKNPKQEYKRESFELFQQLLNTLKHDVISVLSKVQVQAQSDVEEMEARRREEDAKIQRDYQHAAAEALVGGGDEDDESIAAHTPMIRDGDKVGRNDPCPCGSGRKYKQCHGKLS.

ATP is bound by residues glutamine 87, 105–109 (GEGKT), and aspartate 512. The interval 863–909 (LVGGGDEDDESIAAHTPMIRDGDKVGRNDPCPCGSGRKYKQCHGKLS) is disordered. Over residues 880–889 (MIRDGDKVGR) the composition is skewed to basic and acidic residues. Residues cysteine 893, cysteine 895, cysteine 904, and histidine 905 each coordinate Zn(2+). Residues 899–909 (RKYKQCHGKLS) are compositionally biased toward basic residues.

Belongs to the SecA family. Monomer and homodimer. Part of the essential Sec protein translocation apparatus which comprises SecA, SecYEG and auxiliary proteins SecDF-YajC and YidC. Requires Zn(2+) as cofactor.

It is found in the cell inner membrane. It localises to the cytoplasm. It catalyses the reaction ATP + H2O + cellular proteinSide 1 = ADP + phosphate + cellular proteinSide 2.. Its function is as follows. Part of the Sec protein translocase complex. Interacts with the SecYEG preprotein conducting channel. Has a central role in coupling the hydrolysis of ATP to the transfer of proteins into and across the cell membrane, serving both as a receptor for the preprotein-SecB complex and as an ATP-driven molecular motor driving the stepwise translocation of polypeptide chains across the membrane. The chain is Protein translocase subunit SecA from Shewanella putrefaciens (strain CN-32 / ATCC BAA-453).